A 342-amino-acid polypeptide reads, in one-letter code: L-threonine 3-dehydrogenase (342 aa).

Residue cysteine 38 coordinates Zn(2+). Residues threonine 40 and histidine 43 each act as charge relay system in the active site. Zn(2+) contacts are provided by histidine 63, glutamate 64, cysteine 93, cysteine 96, cysteine 99, and cysteine 107. NAD(+) is bound by residues isoleucine 175, aspartate 195, arginine 200, 262 to 264 (LGI), and 286 to 287 (IY).

The protein belongs to the zinc-containing alcohol dehydrogenase family. In terms of assembly, homotetramer. Requires Zn(2+) as cofactor.

It localises to the cytoplasm. The catalysed reaction is L-threonine + NAD(+) = (2S)-2-amino-3-oxobutanoate + NADH + H(+). The protein operates within amino-acid degradation; L-threonine degradation via oxydo-reductase pathway; glycine from L-threonine: step 1/2. Its function is as follows. Catalyzes the NAD(+)-dependent oxidation of L-threonine to 2-amino-3-ketobutyrate. This Aeromonas salmonicida (strain A449) protein is L-threonine 3-dehydrogenase.